Consider the following 459-residue polypeptide: Cysteine--tRNA ligase (459 aa).

C28 provides a ligand contact to Zn(2+). A 'HIGH' region motif is present at residues 30 to 40 (ITIYDLCHIGH). 3 residues coordinate Zn(2+): C209, H234, and E238. A 'KMSKS' region motif is present at residues 266 to 270 (KMSKS). K269 is an ATP binding site.

It belongs to the class-I aminoacyl-tRNA synthetase family. In terms of assembly, monomer. The cofactor is Zn(2+).

Its subcellular location is the cytoplasm. The enzyme catalyses tRNA(Cys) + L-cysteine + ATP = L-cysteinyl-tRNA(Cys) + AMP + diphosphate. This is Cysteine--tRNA ligase from Shewanella denitrificans (strain OS217 / ATCC BAA-1090 / DSM 15013).